We begin with the raw amino-acid sequence, 395 residues long: ETS-related transcription factor Elf-3 (395 aa).

Residues 69–155 (EPPAVLHLAE…AQLRDLTSSS (87 aa)) form the PNT domain. Residues 200–240 (ASPYYGSSYGPGAPSPGSSDFSTSGTDTPQSSHSSDSGGSD) show a composition bias toward low complexity. The disordered stretch occupies residues 200–275 (ASPYYGSSYG…HGKRKRGRPR (76 aa)). Residues 246 to 265 (TDSKVFPRDGFPDYKKGEPK) show a composition bias toward basic and acidic residues. Residues 266–275 (HGKRKRGRPR) are compositionally biased toward basic residues. The segment at residues 297 to 379 (THLWEFIRDI…DGRRLVYKFG (83 aa)) is a DNA-binding region (ETS).

This sequence belongs to the ETS family. As to quaternary structure, interacts with TBP. Interacts with CREBBP and EP300; these act as transcriptional coactivators of ELF3 and positively modulate its function. Interacts with XRCC5/KU86 and XRCC6/KU70; these inhibit the ability of ELF3 to bind DNA and negatively modulate its transcriptional activity. Associated with CLND7 and POU2F3. Interacts with ZNF768.

Its subcellular location is the cytoplasm. The protein localises to the nucleus. Its function is as follows. Transcriptional activator that binds and transactivates ETS sequences containing the consensus nucleotide core sequence GGA[AT]. Acts synergistically with POU2F3 to transactivate the SPRR2A promoter and with RUNX1 to transactivate the ANGPT1 promoter. Also transactivates collagenase, CCL20, CLND7, FLG, KRT8, NOS2, PTGS2, SPRR2B, TGFBR2 and TGM3 promoters. Represses KRT4 promoter activity. Involved in mediating vascular inflammation. May play an important role in epithelial cell differentiation and tumorigenesis. May be a critical downstream effector of the ERBB2 signaling pathway. May be associated with mammary gland development and involution. Plays an important role in the regulation of transcription with TATA-less promoters in preimplantation embryos, which is essential in preimplantation development. The sequence is that of ETS-related transcription factor Elf-3 from Rattus norvegicus (Rat).